A 660-amino-acid polypeptide reads, in one-letter code: Zeaxanthin epoxidase, chloroplastic (660 aa).

A chloroplast-targeting transit peptide spans 1 to 49 (MYASSARDGIPGKWCNARRKQLPLLISKDFPAELYHSLPCKSLENGHIK). FAD is bound by residues 79 to 107 (KVLV…LVFE) and 357 to 370 (TFSW…LLGD). The FHA domain maps to 545-609 (LVLSRDENMP…HGTWFIDNEG (65 aa)).

Requires FAD as cofactor.

Its subcellular location is the plastid. It is found in the chloroplast membrane. It localises to the chloroplast thylakoid membrane. The catalysed reaction is all-trans-zeaxanthin + 4 reduced [2Fe-2S]-[ferredoxin] + 2 O2 + 4 H(+) = all-trans-violaxanthin + 4 oxidized [2Fe-2S]-[ferredoxin] + 2 H2O. It catalyses the reaction all-trans-zeaxanthin + 2 reduced [2Fe-2S]-[ferredoxin] + O2 + 2 H(+) = all-trans-antheraxanthin + 2 oxidized [2Fe-2S]-[ferredoxin] + H2O. The enzyme catalyses all-trans-antheraxanthin + 2 reduced [2Fe-2S]-[ferredoxin] + O2 + 2 H(+) = all-trans-violaxanthin + 2 oxidized [2Fe-2S]-[ferredoxin] + H2O. It carries out the reaction beta-cryptoxanthin + 2 reduced [2Fe-2S]-[ferredoxin] + O2 + 2 H(+) = (5R,6S)-5,6-epoxi-beta-cryptoxanthin + 2 oxidized [2Fe-2S]-[ferredoxin] + H2O. The protein operates within plant hormone biosynthesis; abscisate biosynthesis. Its function is as follows. Converts zeaxanthin into antheraxanthin and subsequently violaxanthin. Also acts on beta-cryptoxanthin. Involved in the epoxidation of zeaxanthin. The polypeptide is Zeaxanthin epoxidase, chloroplastic (Capsicum annuum (Capsicum pepper)).